Reading from the N-terminus, the 217-residue chain is Guanylate kinase (217 aa).

Positions 10–190 (GLLIILSSPS…TEEALKTIIT (181 aa)) constitute a Guanylate kinase-like domain. ATP is bound at residue 17–24 (SPSGAGKS).

It belongs to the guanylate kinase family.

The protein localises to the cytoplasm. It catalyses the reaction GMP + ATP = GDP + ADP. Essential for recycling GMP and indirectly, cGMP. This Ruegeria sp. (strain TM1040) (Silicibacter sp.) protein is Guanylate kinase.